A 1902-amino-acid polypeptide reads, in one-letter code: Rho GTPase-activating protein 21-B (1902 aa).

Disordered stretches follow at residues 1–44 (MATR…EGFC), 78–97 (TSVK…RPRN), 284–317 (RTNR…NVPM), 348–369 (PAAH…GSHQ), 409–450 (NTTD…SQER), 581–603 (TRNF…RSGF), 613–632 (IPTP…DDGI), and 879–902 (KARE…DVFS). A compositionally biased stretch (polar residues) spans 10-22 (EQQQEPSSPASEI). The region spanning 77–162 (HTSVKDEENG…TLELSVMPKD (86 aa)) is the PDZ domain. Low complexity predominate over residues 305–317 (TTSPSSSTPNVPM). The segment covering 409-424 (NTTDYNQMLPNRSSGQ) has biased composition (polar residues). The 114-residue stretch at 903-1016 (DSNKEGFLYF…WIKAIQENGN (114 aa)) folds into the PH domain. The span at 1039 to 1063 (TMMSSSSNKTEPSPKAQRQTLSIRQ) shows a compositional bias: polar residues. Positions 1039-1095 (TMMSSSSNKTEPSPKAQRQTLSIRQQFRAGKPDDDISPPKDKGSWRRIMKKPFEKKP) are disordered. The segment covering 1068-1082 (GKPDDDISPPKDKGS) has biased composition (basic and acidic residues). The region spanning 1103–1295 (VRLDDCPPAH…TLIQKHDWFF (193 aa)) is the Rho-GAP domain. Disordered regions lie at residues 1306 to 1357 (TVHE…GSGK), 1375 to 1394 (RKRK…DELD), 1494 to 1520 (MSDS…VSPE), 1559 to 1704 (VQSV…EPAW), 1729 to 1748 (QKAN…RHTL), and 1803 to 1890 (TSTS…KLSG). Low complexity predominate over residues 1339-1357 (SDSATSDSAKSKGSWGSGK). Residues 1494–1511 (MSDSGTMLSTSSQASVQG) show a composition bias toward polar residues. Composition is skewed to basic and acidic residues over residues 1575–1585 (SELVSEGRPME) and 1601–1613 (FDRR…EEPS). Over residues 1614 to 1630 (RNVQVNSEGSPSCTEGS) the composition is skewed to polar residues. 2 stretches are compositionally biased toward basic and acidic residues: residues 1634–1652 (KMDR…DTLS) and 1661–1673 (TDSD…KTEE). The segment covering 1737–1748 (RKKKNIRRRHTL) has biased composition (basic residues). Over residues 1865–1878 (NGDSFQSKNKNNFS) the composition is skewed to polar residues.

The protein resides in the golgi apparatus membrane. It localises to the cell junction. The protein localises to the cytoplasmic vesicle membrane. It is found in the cytoplasm. Its subcellular location is the cytoskeleton. In terms of biological role, GTPase-activating protein (GAP) for rhoa and cdc42. The polypeptide is Rho GTPase-activating protein 21-B (arhgap21-b) (Xenopus laevis (African clawed frog)).